Reading from the N-terminus, the 481-residue chain is Wax ester synthase/diacylglycerol acyltransferase 1 (481 aa).

Residues 1 to 185 (MKAEKVMERE…TTATKKPADS (185 aa)) lie on the Cytoplasmic side of the membrane. Residue histidine 147 is the Proton acceptor of the active site. A helical transmembrane segment spans residues 186-206 (MAWWLFVGFWFMIRVTFTTIV). Over 207 to 481 (EFSKLMLTVC…QGEIFHKTEV (275 aa)) the chain is Lumenal.

It in the N-terminal section; belongs to the long-chain O-acyltransferase family. Expressed in flowers, siliques, top parts of stems, and leaves. Not found in roots, seeds and young seedlings.

Its subcellular location is the cell membrane. The protein resides in the endoplasmic reticulum membrane. It catalyses the reaction a long chain fatty alcohol + a fatty acyl-CoA = a wax ester + CoA. The catalysed reaction is an acyl-CoA + a 1,2-diacyl-sn-glycerol = a triacyl-sn-glycerol + CoA. It participates in glycerolipid metabolism; triacylglycerol biosynthesis. Its pathway is lipid metabolism. Its function is as follows. Bifunctional wax ester synthase/diacylglycerol acyltransferase. Involved in cuticular wax biosynthesis. Required to reduce leaf water loss, especially during drought. This is Wax ester synthase/diacylglycerol acyltransferase 1 from Arabidopsis thaliana (Mouse-ear cress).